A 279-amino-acid chain; its full sequence is Large ribosomal subunit protein uL2 (279 aa).

The segment at 223-279 is disordered; sequence MAMNPVDHPMGGGEGKSKSGGGRKHPKSPWGQLAKGLKTRNKKKASSKLIVRGRKSK. The span at 232 to 242 shows a compositional bias: gly residues; sequence MGGGEGKSKSG. Residues 259-279 show a composition bias toward basic residues; the sequence is LKTRNKKKASSKLIVRGRKSK.

Belongs to the universal ribosomal protein uL2 family. As to quaternary structure, part of the 50S ribosomal subunit. Forms a bridge to the 30S subunit in the 70S ribosome.

One of the primary rRNA binding proteins. Required for association of the 30S and 50S subunits to form the 70S ribosome, for tRNA binding and peptide bond formation. It has been suggested to have peptidyltransferase activity; this is somewhat controversial. Makes several contacts with the 16S rRNA in the 70S ribosome. The protein is Large ribosomal subunit protein uL2 of Prosthecochloris aestuarii (strain DSM 271 / SK 413).